Reading from the N-terminus, the 249-residue chain is 4-hydroxy-tetrahydrodipicolinate reductase (249 aa).

NAD(+) contacts are provided by residues 77-79 and 101-104; these read ATT and SYNT. H133 (proton donor/acceptor) is an active-site residue. H134 contributes to the (S)-2,3,4,5-tetrahydrodipicolinate binding site. Catalysis depends on K137, which acts as the Proton donor. (S)-2,3,4,5-tetrahydrodipicolinate is bound at residue 143 to 144; the sequence is GT.

Belongs to the DapB family.

Its subcellular location is the cytoplasm. The catalysed reaction is (S)-2,3,4,5-tetrahydrodipicolinate + NAD(+) + H2O = (2S,4S)-4-hydroxy-2,3,4,5-tetrahydrodipicolinate + NADH + H(+). It carries out the reaction (S)-2,3,4,5-tetrahydrodipicolinate + NADP(+) + H2O = (2S,4S)-4-hydroxy-2,3,4,5-tetrahydrodipicolinate + NADPH + H(+). Its pathway is amino-acid biosynthesis; L-lysine biosynthesis via DAP pathway; (S)-tetrahydrodipicolinate from L-aspartate: step 4/4. In terms of biological role, catalyzes the conversion of 4-hydroxy-tetrahydrodipicolinate (HTPA) to tetrahydrodipicolinate. This Exiguobacterium sp. (strain ATCC BAA-1283 / AT1b) protein is 4-hydroxy-tetrahydrodipicolinate reductase.